We begin with the raw amino-acid sequence, 112 residues long: uncharacterized protein (112 aa).

The protein to Buchnera BUsg564.

This is an uncharacterized protein from Buchnera aphidicola subsp. Acyrthosiphon pisum (strain APS) (Acyrthosiphon pisum symbiotic bacterium).